Reading from the N-terminus, the 68-residue chain is Protein SlyX homolog (68 aa).

Belongs to the SlyX family.

The protein is Protein SlyX homolog of Pseudomonas syringae pv. syringae (strain B728a).